Here is a 371-residue protein sequence, read N- to C-terminus: MDLIEVTEGRTTFRIPVQDPNSPFPPSSAPVFFNPKMAMNRDATVLLLSVLNPEEYLDTMGASGVRGLRVAGECRIPVVINDRDPAAADLIRANLAGAGLEGRVTVEDANVLLSRERFDAVDLDPFGSPAPFTDAACRSAKRYLFVTATDTAPLCGAHLKAGIRRYATKPLNTEYHAEVGLRILLGYVARTMVKYDRGLSPLFCFASAHFLRLHLQAEKGADAADRTVARLGFLYHCPSCPERTEEPGVLPHDHVCPRCGTTMLPIGPLWLGSLSDMALLDQMKERLPDLSLSTERRLGKLLDVLKVELPTSSHYDYHRIAKWIGGSPPAIDVVIARLIQTGYRASRAHYSGTALKTDAPLDAIAAALSAQ.

In terms of domain architecture, Trm1 methyltransferase spans 4–368 (IEVTEGRTTF…APLDAIAAAL (365 aa)). Arginine 41, arginine 66, aspartate 82, aspartate 108, and alanine 109 together coordinate S-adenosyl-L-methionine. Zn(2+) contacts are provided by cysteine 237, cysteine 240, cysteine 256, and cysteine 259.

The protein belongs to the class I-like SAM-binding methyltransferase superfamily. Trm1 family.

It catalyses the reaction guanosine(26) in tRNA + 2 S-adenosyl-L-methionine = N(2)-dimethylguanosine(26) in tRNA + 2 S-adenosyl-L-homocysteine + 2 H(+). Functionally, dimethylates a single guanine residue at position 26 of a number of tRNAs using S-adenosyl-L-methionine as donor of the methyl groups. The sequence is that of tRNA (guanine(26)-N(2))-dimethyltransferase from Methanosphaerula palustris (strain ATCC BAA-1556 / DSM 19958 / E1-9c).